Reading from the N-terminus, the 267-residue chain is Tryptophan 2,3-dioxygenase (267 aa).

Substrate-binding positions include 44-48 (FITIH) and arginine 114. Histidine 225 is a heme binding site. Residue threonine 239 participates in substrate binding.

The protein belongs to the tryptophan 2,3-dioxygenase family. In terms of assembly, homotetramer. Requires heme as cofactor.

The catalysed reaction is L-tryptophan + O2 = N-formyl-L-kynurenine. Its pathway is amino-acid degradation; L-tryptophan degradation via kynurenine pathway; L-kynurenine from L-tryptophan: step 1/2. Heme-dependent dioxygenase that catalyzes the oxidative cleavage of the L-tryptophan (L-Trp) pyrrole ring and converts L-tryptophan to N-formyl-L-kynurenine. Catalyzes the oxidative cleavage of the indole moiety. The chain is Tryptophan 2,3-dioxygenase from Nocardioides sp. (strain ATCC BAA-499 / JS614).